A 328-amino-acid polypeptide reads, in one-letter code: MSTLLEVNNLKTYFFRKKEPIPAVDGVDFHISKGETVALVGESGSGKSITSLSIMGLVQSSGGKIMDGSIKLEDKDLTSFTENDYCKIRGNEVSMIFQEPMTSLNPVLTIGEQITEVLIYHKNMKKKEARQRAVELLQMVGFSRAEQIMKEYPHRLSGGMRQRVMIAIALSCNPKLLIADEPTTALDVTIQAQVLELMKDLCQKFNTSILLITHDLGVVSEAADRVIVMYCGQVVENATVDDLFLEPLHPYTEGLLTSIPVIDGEIDKLNAIKGSVPTPDNLPPGCRFAPRCPKAMDKCWTNQPSLLTHKSGRTVRCFLYEEEGAEQS.

The region spanning 5-256 (LEVNNLKTYF…PLHPYTEGLL (252 aa)) is the ABC transporter domain. 41–48 (GESGSGKS) contacts ATP.

This sequence belongs to the ABC transporter superfamily.

Its subcellular location is the cell membrane. Functionally, this protein is a component of an oligopeptide permease, a binding protein-dependent transport system. This APP system can completely substitute for the OPP system in both sporulation and genetic competence, though, unlike OPP, is incapable of transporting tripeptides. Probably responsible for energy coupling to the transport system. This is Oligopeptide transport ATP-binding protein AppD (appD) from Bacillus subtilis (strain 168).